Consider the following 414-residue polypeptide: Glutamyl-tRNA reductase (414 aa).

Residues 49 to 52, Ser-108, 113 to 115, and Gln-119 each bind substrate; these read TCNR and EPQ. Cys-50 serves as the catalytic Nucleophile. 188-193 provides a ligand contact to NADP(+); it reads GAGQTG.

It belongs to the glutamyl-tRNA reductase family. Homodimer.

The catalysed reaction is (S)-4-amino-5-oxopentanoate + tRNA(Glu) + NADP(+) = L-glutamyl-tRNA(Glu) + NADPH + H(+). It functions in the pathway porphyrin-containing compound metabolism; protoporphyrin-IX biosynthesis; 5-aminolevulinate from L-glutamyl-tRNA(Glu): step 1/2. Catalyzes the NADPH-dependent reduction of glutamyl-tRNA(Glu) to glutamate 1-semialdehyde (GSA). The chain is Glutamyl-tRNA reductase from Francisella tularensis subsp. tularensis (strain WY96-3418).